A 46-amino-acid polypeptide reads, in one-letter code: Mu-segestritoxin-Sf1c (46 aa).

4 cysteine pairs are disulfide-bonded: Cys-3–Cys-19, Cys-10–Cys-22, Cys-18–Cys-42, and Cys-24–Cys-40. Residues 31–33 form a keys region for toxin activity region; sequence RPW.

This sequence belongs to the neurotoxin 16 (SFI) family. Expressed by the venom gland.

It is found in the secreted. In terms of biological role, insecticidal toxin. It inhibits insect voltage-gated sodium channels (Nav) by partially blocking the channel pore in DUM neurons from the American cockroach, not by acting as a gating modifier. The inhibition is only partially reversible after prolonged washout. In vivo, the toxin causes flaccid paralysis followed by death when injected into Heliothis virescens larvae. It also causes uncoordinated movements followed by full paralysis to sheep blowflies (Lucilia cuprina). When the toxin is fused to snowdrop lectin, it is orally active against larvae of the tomato moth (Laconobia oleracea), the rice brown planthopper (Nilaparvata lugens), and the peach-potato aphid (Myzus persicae). In Segestria florentina (Tube-web spider), this protein is Mu-segestritoxin-Sf1c.